Consider the following 158-residue polypeptide: NKG2-F type II integral membrane protein (158 aa).

Residues 1-12 (MNKQRGTYSEVS) show a composition bias toward polar residues. The disordered stretch occupies residues 1 to 30 (MNKQRGTYSEVSLAQDPKRQQRKLKGNKSS). The Cytoplasmic segment spans residues 1-74 (MNKQRGTYSE…LPPPERLTAE (74 aa)). Residues 75–95 (VLGIICIVLMATVLKTIVLIP) form a helical membrane-spanning segment. The Extracellular portion of the chain corresponds to 96 to 158 (CIGVLEQNNF…VLQRTLICFL (63 aa)).

As to quaternary structure, can form disulfide-bonded heterodimer with CD94. As to expression, natural killer cells.

The protein resides in the membrane. Its function is as follows. May play a role as a receptor for the recognition of MHC class I HLA-E molecules by NK cells. This is NKG2-F type II integral membrane protein (KLRC4) from Pan troglodytes (Chimpanzee).